A 959-amino-acid polypeptide reads, in one-letter code: Translation initiation factor IF-2 (959 aa).

The span at M1–T10 shows a compositional bias: basic and acidic residues. A disordered region spans residues M1–I374. Over residues E27–H37 the composition is skewed to polar residues. 2 stretches are compositionally biased toward low complexity: residues A63–P118 and Q128–P138. Basic and acidic residues-rich tracts occupy residues S154–K225 and A232–R241. Residues G246–A284 show a composition bias toward low complexity. Residues P318–R333 are compositionally biased toward basic and acidic residues. A tr-type G domain is found at S457–K626. The interval G466–T473 is G1. G466–T473 provides a ligand contact to GTP. The segment at G491–H495 is G2. Positions D512 to G515 are G3. Residues D512 to H516 and N566 to D569 each bind GTP. The interval N566–D569 is G4. The interval S602 to K604 is G5.

The protein belongs to the TRAFAC class translation factor GTPase superfamily. Classic translation factor GTPase family. IF-2 subfamily.

The protein resides in the cytoplasm. In terms of biological role, one of the essential components for the initiation of protein synthesis. Protects formylmethionyl-tRNA from spontaneous hydrolysis and promotes its binding to the 30S ribosomal subunits. Also involved in the hydrolysis of GTP during the formation of the 70S ribosomal complex. This chain is Translation initiation factor IF-2, found in Brucella abortus (strain 2308).